Here is a 523-residue protein sequence, read N- to C-terminus: NADH-ubiquinone oxidoreductase chain 2 (523 aa).

The next 14 membrane-spanning stretches (helical) occupy residues 3 to 23 (LFGV…IPAI), 30 to 50 (IILL…NNIG), 62 to 82 (VTTI…LVLL), 110 to 130 (SVLA…SSLI), 135 to 155 (LISM…LATI), 170 to 190 (FLLG…LYSF), 212 to 232 (IEIS…AAPF), 246 to 266 (VVTT…ILEF), 281 to 301 (LLLI…LAQY), 306 to 326 (LLTY…AINN), 333 to 353 (FLFY…ILVA), 386 to 406 (GLSL…VGFF), 419 to 439 (GNFF…AYYL), and 490 to 510 (LVIA…TPLL).

Belongs to the complex I subunit 2 family.

It is found in the mitochondrion inner membrane. It carries out the reaction a ubiquinone + NADH + 5 H(+)(in) = a ubiquinol + NAD(+) + 4 H(+)(out). Functionally, core subunit of the mitochondrial membrane respiratory chain NADH dehydrogenase (Complex I) that is believed to belong to the minimal assembly required for catalysis. Complex I functions in the transfer of electrons from NADH to the respiratory chain. The immediate electron acceptor for the enzyme is believed to be ubiquinone. This is NADH-ubiquinone oxidoreductase chain 2 from Rhizopus oryzae (Mucormycosis agent).